Reading from the N-terminus, the 620-residue chain is 1-deoxy-D-xylulose-5-phosphate synthase (620 aa).

Residues histidine 80 and 121–123 contribute to the thiamine diphosphate site; that span reads GHS. Aspartate 152 lines the Mg(2+) pocket. Residues 153 to 154, asparagine 181, tyrosine 288, and glutamate 370 each bind thiamine diphosphate; that span reads GA. Asparagine 181 is a binding site for Mg(2+).

Belongs to the transketolase family. DXPS subfamily. As to quaternary structure, homodimer. It depends on Mg(2+) as a cofactor. Thiamine diphosphate serves as cofactor.

It catalyses the reaction D-glyceraldehyde 3-phosphate + pyruvate + H(+) = 1-deoxy-D-xylulose 5-phosphate + CO2. The protein operates within metabolic intermediate biosynthesis; 1-deoxy-D-xylulose 5-phosphate biosynthesis; 1-deoxy-D-xylulose 5-phosphate from D-glyceraldehyde 3-phosphate and pyruvate: step 1/1. Its function is as follows. Catalyzes the acyloin condensation reaction between C atoms 2 and 3 of pyruvate and glyceraldehyde 3-phosphate to yield 1-deoxy-D-xylulose-5-phosphate (DXP). In Salmonella agona (strain SL483), this protein is 1-deoxy-D-xylulose-5-phosphate synthase.